The primary structure comprises 1036 residues: Cellulose synthase-like protein D1 (1036 aa).

The interval 1 to 99 is disordered; the sequence is MASSPPKKTL…GGGDGPKMGN (99 aa). Composition is skewed to polar residues over residues 9-19 and 69-80; these read TLNSQSSSLSR and NQPAGSSGSTSE. A compositionally biased stretch (gly residues) spans 86 to 95; it reads NRGGGGGDGP. 2 consecutive transmembrane segments (helical) span residues 178–198 and 208–228; these read ILSPYRLLIVIRLVIVFFFLW and AMWLWGLSIVCEIWFAFSWIL. The active site involves D308. Positions 626–665 are disordered; it reads AMHVRTQSQASQTSQASDLESDTQPLNDDPDLGLPKKFGN. Residues 631–642 are compositionally biased toward low complexity; sequence TQSQASQTSQAS. D741 is a catalytic residue. Transmembrane regions (helical) follow at residues 817-837, 848-868, 895-915, 938-958, 962-982, and 1002-1022; these read IYPFTSIFLVVYCFLPALCLF, IHFLSYLLCITVTLTLISLLE, LAAVVQGLLKVIAGIEISFTL, GLFIMPLTIIIVNLVAIVIGA, IYSVIPQWGKLMGGIFFSLWV, and TIVYVWSGLVSITVSLLWITI.

It belongs to the glycosyltransferase 2 family. Plant cellulose synthase-like D subfamily.

Its subcellular location is the golgi apparatus membrane. Functionally, thought to be a Golgi-localized beta-glycan synthase that polymerize the backbones of noncellulosic polysaccharides (hemicelluloses) of plant cell wall. This chain is Cellulose synthase-like protein D1 (CSLD1), found in Arabidopsis thaliana (Mouse-ear cress).